The sequence spans 150 residues: Calmodulin-like protein 7 (150 aa).

EF-hand domains follow at residues 1–36 (MDPT…LGIY), 37–72 (IPDK…IMDE), 75–110 (EEEE…LGLK), and 113–148 (KTLD…GGFN). 19 residues coordinate Ca(2+): Asp14, Asn16, Asp18, Thr20, Glu25, Asp50, Asn52, Asp54, Cys56, Glu61, Asp88, Asn90, Asp92, Glu99, Asp126, Asp128, Asp130, Arg132, and Glu137.

Belongs to the calmodulin family.

Its function is as follows. Potential calcium sensor. The chain is Calmodulin-like protein 7 (CML7) from Arabidopsis thaliana (Mouse-ear cress).